A 78-amino-acid chain; its full sequence is Acyl carrier protein (78 aa).

Residues 4 to 78 enclose the Carrier domain; that stretch reads AEIKDKVYDI…QQAIDYIVKK (75 aa). Ser39 carries the O-(pantetheine 4'-phosphoryl)serine modification.

This sequence belongs to the acyl carrier protein (ACP) family. Post-translationally, 4'-phosphopantetheine is transferred from CoA to a specific serine of apo-ACP by AcpS. This modification is essential for activity because fatty acids are bound in thioester linkage to the sulfhydryl of the prosthetic group.

The protein localises to the cytoplasm. It functions in the pathway lipid metabolism; fatty acid biosynthesis. Carrier of the growing fatty acid chain in fatty acid biosynthesis. The polypeptide is Acyl carrier protein (Chlorobium phaeovibrioides (strain DSM 265 / 1930) (Prosthecochloris vibrioformis (strain DSM 265))).